Consider the following 240-residue polypeptide: Glutathione S-transferase theta-1 (240 aa).

The 81-residue stretch at 2 to 82 (VLELYLDLLS…YLAHKYKVPD (81 aa)) folds into the GST N-terminal domain. Glutathione is bound by residues H40, 53–54 (RV), and 66–67 (ES). Positions 88-222 (DLQARARVDE…VILKVKDCPP (135 aa)) constitute a GST C-terminal domain.

Belongs to the GST superfamily. Theta family. As to quaternary structure, homodimer. In terms of tissue distribution, in liver, highest expression found in central vein limiting plate hepatocytes. Also expressed in interlobular bile duct epithelial cells. In lung, expressed in club cells and ciliated cells of the bronchiolar epithelium and in type II alveolar cells of the lung parenchyma.

The protein localises to the cytoplasm. It localises to the nucleus. It carries out the reaction RX + glutathione = an S-substituted glutathione + a halide anion + H(+). Its function is as follows. Conjugation of reduced glutathione to a wide number of exogenous and endogenous hydrophobic electrophiles. Also binds steroids, bilirubin, carcinogens and numerous organic anions. Has dichloromethane dehalogenase activity. The chain is Glutathione S-transferase theta-1 (Gstt1) from Mus musculus (Mouse).